Consider the following 373-residue polypeptide: Phosphoserine aminotransferase (373 aa).

Arginine 46 contacts L-glutamate. Positions 104, 150, 172, and 195 each coordinate pyridoxal 5'-phosphate. Lysine 196 is modified (N6-(pyridoxal phosphate)lysine). 247–248 (NT) provides a ligand contact to pyridoxal 5'-phosphate.

This sequence belongs to the class-V pyridoxal-phosphate-dependent aminotransferase family. SerC subfamily. In terms of assembly, homodimer. Requires pyridoxal 5'-phosphate as cofactor.

Its subcellular location is the cytoplasm. The enzyme catalyses O-phospho-L-serine + 2-oxoglutarate = 3-phosphooxypyruvate + L-glutamate. It carries out the reaction 4-(phosphooxy)-L-threonine + 2-oxoglutarate = (R)-3-hydroxy-2-oxo-4-phosphooxybutanoate + L-glutamate. It participates in amino-acid biosynthesis; L-serine biosynthesis; L-serine from 3-phospho-D-glycerate: step 2/3. Its pathway is cofactor biosynthesis; pyridoxine 5'-phosphate biosynthesis; pyridoxine 5'-phosphate from D-erythrose 4-phosphate: step 3/5. Its function is as follows. Catalyzes the reversible conversion of 3-phosphohydroxypyruvate to phosphoserine and of 3-hydroxy-2-oxo-4-phosphonooxybutanoate to phosphohydroxythreonine. The protein is Phosphoserine aminotransferase of Rhodococcus opacus (strain B4).